Reading from the N-terminus, the 548-residue chain is Pentatricopeptide repeat-containing protein At1g62680, mitochondrial (548 aa).

The N-terminal 43 residues, 1 to 43 (MQRSIAMTAKRFLHRNLLENGKPRTASSPSFSHCSSCRCWVRA), are a transit peptide targeting the mitochondrion. PPR repeat units lie at residues 84-118 (SIVD…GIRN), 119-153 (DLYT…GYEP), 154-188 (DRVT…GYKP), 189-223 (DIVA…GIRP), 224-258 (NVVT…KITP), 259-293 (NVIT…SIDP), 294-328 (DIVT…GCLA), 329-363 (DVVS…GLVS), 364-398 (NTVT…GISP), 399-433 (DIWT…EMDL), 434-468 (DIVT…GLKP), and 469-503 (DIVT…GLMK).

Belongs to the PPR family. P subfamily.

It is found in the mitochondrion. The sequence is that of Pentatricopeptide repeat-containing protein At1g62680, mitochondrial from Arabidopsis thaliana (Mouse-ear cress).